The chain runs to 368 residues: MRSVEILGLAALGSLVAAAPSPSRVSNSAKKASSCTFTSAAQASKSASGCSEITLDNIAVPAGETLDLSHVDDGTTIIFEGTTSFGYKEWKGPLIQFAGTGITVKQNTGAVIDGDGSRWWDGKGTNGGKTKPKFMYAHKLRDSTITGLSIKNTPVQAISVQATNLQLTDITIDNSDGDENGGHNTDAFDIGESNGVYIRGAVVKNQDDCIAINSGENIEFSGGSCSGGHGLSIGSVGGRDNNIVKNVTITDSTISDSDNGVRIKTIYDATGSVGDVTYSNIKLSNIAKYGIVIEQDYENGSPTGTPTTGVPITGLTIDGITGSVASNAVQVYILCGDGSCSDWTWKGVDLTGGKKSSKCENVPSGASC.

A signal peptide spans 1–18 (MRSVEILGLAALGSLVAA). The propeptide occupies 19-31 (APSPSRVSNSAKK). A disulfide bond links Cys-35 and Cys-50. 2 PbH1 repeats span residues 162–192 (ATNL…DIGE) and 193–214 (SNGV…AINS). Asp-207 acts as the Proton donor in catalysis. Residues Cys-209 and Cys-225 are joined by a disulfide bond. The active site involves His-229. PbH1 repeat units follow at residues 244–265 (VKNV…RIKT), 273–295 (VGDV…VIEQ), and 307–328 (TTGV…ASNA). Asn-246 carries N-linked (GlcNAc...) asparagine glycosylation. Cystine bridges form between Cys-335–Cys-340 and Cys-359–Cys-368.

Belongs to the glycosyl hydrolase 28 family.

It is found in the secreted. The enzyme catalyses (1,4-alpha-D-galacturonosyl)n+m + H2O = (1,4-alpha-D-galacturonosyl)n + (1,4-alpha-D-galacturonosyl)m.. Its function is as follows. Involved in maceration and soft-rotting of plant tissue. Hydrolyzes the 1,4-alpha glycosidic bonds of de-esterified pectate in the smooth region of the plant cell wall. This Aspergillus clavatus (strain ATCC 1007 / CBS 513.65 / DSM 816 / NCTC 3887 / NRRL 1 / QM 1276 / 107) protein is Probable endopolygalacturonase I (pgaI).